We begin with the raw amino-acid sequence, 602 residues long: mRNA-decapping enzyme 1A (602 aa).

At Ser-82 the chain carries Phosphoserine. The span at Arg-152 to Gln-161 shows a compositional bias: basic and acidic residues. 3 disordered regions span residues Arg-152 to Pro-174, Asn-191 to His-234, and Gly-267 to Ser-291. Phosphoserine occurs at positions 162, 199, and 200. The segment covering Met-193–Ser-229 has biased composition (polar residues). 2 positions are modified to phosphoserine: Ser-335 and Ser-339. Phosphothreonine is present on Thr-367. Ser-372 carries the post-translational modification Phosphoserine. Asymmetric dimethylarginine is present on Arg-395. Thr-420 is subject to Phosphothreonine. A phosphoserine mark is found at Ser-441, Ser-542, Ser-543, and Ser-545. 2 positions are modified to phosphothreonine: Thr-548 and Thr-551.

This sequence belongs to the DCP1 family. In terms of assembly, forms a complex with EDC3, DCP2, DDX6 and EDC4/HEDLS, within this complex directly interacts with EDC3. Part of a cytoplasmic complex containing proteins involved in mRNA decay, including XRN1 and LSM1. Interacts with DCP1B. Interacts with DCP2. Interacts with DDX17 in an RNA-independent manner. Interacts with PNRC2. Interacts with SMAD4. Interacts with UPF1. Interacts with ZC3HAV1. Interacts with ZFP36L1. Interacts with NBDY. Interacts with DHX34; the interaction is RNA-independent. In terms of tissue distribution, ubiquitous, with highest expression in the spleen and testis (at protein level).

It localises to the cytoplasm. The protein localises to the P-body. It is found in the nucleus. It catalyses the reaction a 5'-end (N(7)-methyl 5'-triphosphoguanosine)-ribonucleoside in mRNA + H2O = N(7)-methyl-GDP + a 5'-end phospho-ribonucleoside in mRNA + 2 H(+). Functionally, necessary for the degradation of mRNAs, both in normal mRNA turnover and in nonsense-mediated mRNA decay. Removes the 7-methyl guanine cap structure from mRNA molecules, yielding a 5'-phosphorylated mRNA fragment and 7m-GDP. Contributes to the transactivation of target genes after stimulation by TGFB1. Essential for embryonic development. The protein is mRNA-decapping enzyme 1A (Dcp1a) of Mus musculus (Mouse).